Consider the following 1543-residue polypeptide: ATP-binding cassette sub-family C member 2 (1543 aa).

Residues 1–26 (MDEFCNSTFWNLSLLKSPEADLPLCF) lie on the Extracellular side of the membrane. Asparagine 6 and asparagine 11 each carry an N-linked (GlcNAc...) asparagine glycan. A helical transmembrane segment spans residues 27–47 (EQTVLVWIPLGFLWLLAPWQL). Residues 48 to 67 (YRIYRSRTKRFAITKFYLAK) are Cytoplasmic-facing. The chain crosses the membrane as a helical span at residues 68–88 (QVFVVCLLILAAIDLSLALTE). Residues 89–92 (DTGQ) are Extracellular-facing. A helical membrane pass occupies residues 93 to 113 (ATIPPVKYTNPILYLCTWLLV). Residues 114–125 (LVIQHCRQCCIQ) are Cytoplasmic-facing. Residues 126-146 (KNSWFLSMFWILSLLCGIFQF) form a helical membrane-spanning segment. Residues 147–164 (QTLIRALLQDSKSNMTYS) lie on the Extracellular side of the membrane. Asparagine 160 carries an N-linked (GlcNAc...) asparagine glycan. A helical membrane pass occupies residues 165–185 (CLFFVSYGFQIVILILSAFSE). The Cytoplasmic segment spans residues 186–311 (SSDSTHAPSA…DFPKSWLVKA (126 aa)). The segment at 260-285 (LKKSQQSPEGTSHGLTKKQSQSQDVL) is disordered. Positions 263–283 (SQQSPEGTSHGLTKKQSQSQD) are enriched in polar residues. Phosphoserine is present on residues serine 279 and serine 281. A helical transmembrane segment spans residues 312–332 (LFKTFYVVILKSFILKLAHDI). The ABC transmembrane type-1 1 domain maps to 320–603 (ILKSFILKLA…LPMVISSVIQ (284 aa)). At 333–358 (LLFLNPQLLKFLIGFVKDPDSYPWVG) the chain is on the extracellular side. The helical transmembrane segment at 359-379 (YIYAILMFSVTLIQSFFLQCY) threads the bilayer. The Cytoplasmic portion of the chain corresponds to 380 to 435 (FQFCFVLGMTVRTTIIASVYKKALTLSNLARRQYTIGETVNLMSVDSQKLMDVTNY). The chain crosses the membrane as a helical span at residues 436–456 (IHLLWSSVLQIALSIFFLWRE). At 457-459 (LGP) the chain is on the extracellular side. The helical transmembrane segment at 460–480 (SILAGVGLMVLLVPVNGVLAT) threads the bilayer. Residues 481–542 (KIRKIQVQNM…NLLRFSQLQT (62 aa)) are Cytoplasmic-facing. Residues 543 to 563 (ILIFILHLTPTLVSVITFSVY) traverse the membrane as a helical segment. Topologically, residues 564 to 585 (VLVDSQNVLNAEKAFTSITLFN) are extracellular. Residues 586 to 606 (ILRFPLAMLPMVISSVIQASV) traverse the membrane as a helical segment. At 607–969 (SVDRLEQYLG…VKFSIYLKYL (363 aa)) the chain is on the cytoplasmic side. The ABC transporter 1 domain maps to 635–859 (VQFSEASFTW…KGVFAKNWKT (225 aa)). Residue 669 to 676 (GTVGSGKS) coordinates ATP. Serine 876 is subject to Phosphoserine. Residues 903–927 (RENSLRRTLSRSSRSGSRRGKSLKS) form a disordered region. Residues 908–917 (RRTLSRSSRS) show a composition bias toward low complexity. 2 positions are modified to phosphoserine: serine 924 and serine 928. Residues 970 to 990 (QAVGWWSLLFIVIFYVLNYVA) traverse the membrane as a helical segment. The 286-residue stretch at 977–1262 (LLFIVIFYVL…LVRMTSEVET (286 aa)) folds into the ABC transmembrane type-1 2 domain. The Extracellular portion of the chain corresponds to 991–1031 (FIGTNLWLSAWTSDSEKQNGTDNSPSQRDMRIGVFGALGIA). Asparagine 1009 carries N-linked (GlcNAc...) asparagine glycosylation. The chain crosses the membrane as a helical span at residues 1032–1052 (QGIFLLSSSLWSIYACRNASK). Residues 1053 to 1095 (TLHRQLLTNILRAPMSFFDTTPTGRIVNRFAGDISTVDDTLPQ) are Cytoplasmic-facing. A helical transmembrane segment spans residues 1096–1116 (TLRSWLLCFFGIVSTLVMICM). A topological domain (extracellular) is located at residue alanine 1117. A helical transmembrane segment spans residues 1118 to 1138 (TPIFIIIIIPLSILYVSVQVF). Residues 1139–1209 (YVATSRQLRR…TSNRWLAIRL (71 aa)) are Cytoplasmic-facing. The helical transmembrane segment at 1210 to 1230 (ELVGNLIVFCSALLLVIYKNS) threads the bilayer. Topologically, residues 1231–1232 (LT) are extracellular. Residues 1233 to 1253 (GDTVGFVLSNALNITQTLNWL) traverse the membrane as a helical segment. At 1254 to 1543 (VRMTSEVETN…GIESVNHTEL (290 aa)) the chain is on the cytoplasmic side. Residues 1298-1532 (IQFNNYQVRY…MGPFYLMAKE (235 aa)) enclose the ABC transporter 2 domain. An ATP-binding site is contributed by 1332–1339 (GRTGAGKS). Phosphoserine is present on serine 1436.

The protein belongs to the ABC transporter superfamily. ABCC family. Conjugate transporter (TC 3.A.1.208) subfamily. Expressed in liver.

The protein localises to the apical cell membrane. It carries out the reaction an S-substituted glutathione(in) + ATP + H2O = an S-substituted glutathione(out) + ADP + phosphate + H(+). The catalysed reaction is taurolithocholate 3-sulfate(in) + ATP + H2O = taurolithocholate 3-sulfate(out) + ADP + phosphate + H(+). The enzyme catalyses ATP + H2O + xenobioticSide 1 = ADP + phosphate + xenobioticSide 2.. It catalyses the reaction leukotriene C4(in) + ATP + H2O = leukotriene C4(out) + ADP + phosphate + H(+). It carries out the reaction 17beta-estradiol 17-O-(beta-D-glucuronate)(in) + ATP + H2O = 17beta-estradiol 17-O-(beta-D-glucuronate)(out) + ADP + phosphate + H(+). The catalysed reaction is (4Z,15Z)-bilirubin IXalpha C8-beta-D-glucuronoside(in) + ATP + H2O = (4Z,15Z)-bilirubin IXalpha C8-beta-D-glucuronoside(out) + ADP + phosphate + H(+). The enzyme catalyses (4Z,15Z)-bilirubin IXalpha C8,C12-beta-D-bisglucuronoside(in) + ATP + H2O = (4Z,15Z)-bilirubin IXalpha C8,C12-beta-D-bisglucuronoside(out) + ADP + phosphate + H(+). Functionally, ATP-dependent transporter of the ATP-binding cassette (ABC) family that binds and hydrolyzes ATP to enable active transport of various substrates including many drugs, toxicants and endogenous compound across cell membranes. Transports a wide variety of conjugated organic anions such as sulfate-, glucuronide- and glutathione (GSH)-conjugates of endo- and xenobiotics substrates. Mediates hepatobiliary excretion of mono- and bis-glucuronidated bilirubin molecules and therefore play an important role in bilirubin detoxification. Mediates also hepatobiliary excretion of others glucuronide conjugates such as 17beta-estradiol 17-glucosiduronic acid and leukotriene C4. Transports sulfated bile salt such as taurolithocholate sulfate. Transports various anticancer drugs, such as anthracycline, vinca alkaloid and methotrexate and HIV-drugs such as protease inhibitors. This is ATP-binding cassette sub-family C member 2 from Mus musculus (Mouse).